The following is a 122-amino-acid chain: Small ribosomal subunit protein uS13 (122 aa).

The tract at residues 92–122 is disordered; the sequence is HRRGLPVRGQRTHTNARTRKGPAKPIAGKKK.

It belongs to the universal ribosomal protein uS13 family. In terms of assembly, part of the 30S ribosomal subunit. Forms a loose heterodimer with protein S19. Forms two bridges to the 50S subunit in the 70S ribosome.

In terms of biological role, located at the top of the head of the 30S subunit, it contacts several helices of the 16S rRNA. In the 70S ribosome it contacts the 23S rRNA (bridge B1a) and protein L5 of the 50S subunit (bridge B1b), connecting the 2 subunits; these bridges are implicated in subunit movement. Contacts the tRNAs in the A and P-sites. The chain is Small ribosomal subunit protein uS13 from Paracoccus denitrificans (strain Pd 1222).